The following is a 274-amino-acid chain: AA9 family lytic polysaccharide monooxygenase A (274 aa).

Residues 1–22 (MHVPQFISTGALLALLARPAAA) form the signal peptide. A Cu(2+)-binding site is contributed by histidine 23. Cysteines 63 and 194 form a disulfide. 3 residues coordinate (1,4-beta-D-glucosyl)n: glycine 67, aspartate 98, and serine 100. Residue histidine 101 participates in Cu(2+) binding. Histidine 174 is an O2 binding site. Aspartate 177 serves as a coordination point for (1,4-beta-D-glucosyl)n. A Cu(2+)-binding site is contributed by tyrosine 191.

It belongs to the polysaccharide monooxygenase AA9 family. The cofactor is Cu(2+).

It is found in the secreted. The catalysed reaction is [(1-&gt;4)-beta-D-glucosyl]n+m + reduced acceptor + O2 = 4-dehydro-beta-D-glucosyl-[(1-&gt;4)-beta-D-glucosyl]n-1 + [(1-&gt;4)-beta-D-glucosyl]m + acceptor + H2O.. Functionally, lytic polysaccharide monooxygenase (LPMO) that depolymerizes crystalline and amorphous polysaccharides via the oxidation of scissile alpha- or beta-(1-4)-glycosidic bonds, yielding C4 oxidation products. Catalysis by LPMOs requires the reduction of the active-site copper from Cu(II) to Cu(I) by a reducing agent and H(2)O(2) or O(2) as a cosubstrate. Cleaves a range of polysaccharides, including cellulose, xyloglucan, mixed-linkage glucan and glucomannan. The chain is AA9 family lytic polysaccharide monooxygenase A from Collariella virescens (Soil fungus).